Reading from the N-terminus, the 451-residue chain is MPQTQKPDFPGNDLGDQFRFWPKHNEKIYERLENKHAWLEEKRAAAQGDGKPPATQRSEVDPLENEMILNIGPQHPATHGVLRCVVKMDGETIEKSVLDIGYLHRGIEKLAEHKTYQEFMPYTDRMDYLSPYSNNVAWCLAVEKLADIEVPERAQWIRMIMSELARISSHCLWLGVGMMDAGAVSGFVWTFQEREEIYSIMDEVAGARFTVSHSRIGGVANDFSPRAIEMIRDFVDTFPDRIAGWEGLLNKNRIWVERNKGVGRVTKEEALELGLTGPNLRGSGVPYDVRRFEPYLKYDEVDFTIPVREEGDCLARYFLRLDEMKQSVRIIEQCLDRMTEGPIRSDDAKEAYPSKEEVYYSMEGMIHDFMYTDVGTVPPKGAHSYHAIEGPKGELGFYLTSDGTGRPWRVRINAPSFTNLQAMEHMLEGEMVADTVVIIGSLDPVMGEADK.

The protein belongs to the complex I 49 kDa subunit family. As to quaternary structure, NDH-1 is composed of 14 different subunits. Subunits NuoB, C, D, E, F, and G constitute the peripheral sector of the complex.

It is found in the cell inner membrane. The enzyme catalyses a quinone + NADH + 5 H(+)(in) = a quinol + NAD(+) + 4 H(+)(out). Functionally, NDH-1 shuttles electrons from NADH, via FMN and iron-sulfur (Fe-S) centers, to quinones in the respiratory chain. The immediate electron acceptor for the enzyme in this species is believed to be a menaquinone. Couples the redox reaction to proton translocation (for every two electrons transferred, four hydrogen ions are translocated across the cytoplasmic membrane), and thus conserves the redox energy in a proton gradient. This chain is NADH-quinone oxidoreductase subunit D, found in Salinibacter ruber (strain DSM 13855 / M31).